Reading from the N-terminus, the 398-residue chain is MTKKTVASLSKSDLSGKKVLMRADFNVPVDNGSITDDTRIRAALPTIQDLTEKGAKVILTSHFGRPKGKVNEKMRLTLVGERLSEVLGKEVKKCDDCIGDEVTSTVAEMKDGDVVLLENVRFYSGEEGNDPEFAKQLASVADLYVNDAFGTAHRAHASTEGVTKYLSPSVAGYLIEQELKFLQGAIDSPQKPLAAIIGGSKVSSKIGVIEALLDKCDKLLLGGGMIFTFYKARGLSVGKSLVEEDKIELAKSLEAKAKEKGVTMLLPTDVVVADKFDPEANTQTVSIEAIPDGWMGLDIGPESAKVFQDALADCKTVIWNGPMGVFEMEKFAKGTEAIAQTLADKQDAITIIGGGDSVAAVEQLGLGEKMSHISTGGGASLELLEGKKLPGIVALDDQ.

Residues 24–26, arginine 39, 62–65, arginine 121, and arginine 154 each bind substrate; these read DFN and HFGR. Residues lysine 205, glycine 296, glutamate 327, and 354–357 contribute to the ATP site; that span reads GGDS.

It belongs to the phosphoglycerate kinase family. As to quaternary structure, monomer.

The protein localises to the cytoplasm. The catalysed reaction is (2R)-3-phosphoglycerate + ATP = (2R)-3-phospho-glyceroyl phosphate + ADP. Its pathway is carbohydrate degradation; glycolysis; pyruvate from D-glyceraldehyde 3-phosphate: step 2/5. This chain is Phosphoglycerate kinase, found in Trichodesmium erythraeum (strain IMS101).